We begin with the raw amino-acid sequence, 214 residues long: Outer-membrane lipoprotein carrier protein (214 aa).

Residues 1–24 form the signal peptide; the sequence is MKIKLAFAVLLALCLSLSVMPVLA.

The protein belongs to the LolA family. As to quaternary structure, monomer.

The protein localises to the periplasm. Participates in the translocation of lipoproteins from the inner membrane to the outer membrane. Only forms a complex with a lipoprotein if the residue after the N-terminal Cys is not an aspartate (The Asp acts as a targeting signal to indicate that the lipoprotein should stay in the inner membrane). The chain is Outer-membrane lipoprotein carrier protein from Alkalilimnicola ehrlichii (strain ATCC BAA-1101 / DSM 17681 / MLHE-1).